We begin with the raw amino-acid sequence, 572 residues long: Cytochrome P450 monooxygenase xilC (572 aa).

Cys515 is a heme binding site.

Belongs to the cytochrome P450 family. The cofactor is heme.

It functions in the pathway secondary metabolite biosynthesis. Its function is as follows. Cytochrome P450 monooxygenase; part of the gene cluster that mediates the biosynthesis of the 6-methyl-2-pyrone derivative xylariolide D. XilC hydroxylates the 5-alkyl-6-methyl-2-pyrone backbone called prexylariolide D, produced by the highly reducing polyketide synthase xilA, on its side chain to form xylariolide D. This Penicillium rubens (strain ATCC 28089 / DSM 1075 / NRRL 1951 / Wisconsin 54-1255) (Penicillium chrysogenum) protein is Cytochrome P450 monooxygenase xilC.